A 150-amino-acid chain; its full sequence is Ribonuclease pancreatic delta-type (150 aa).

The N-terminal stretch at 1 to 25 (MGLEKSLILFSLLVLVLGWVQPSLG) is a signal peptide. Arg-35 lines the substrate pocket. His-37 (proton acceptor) is an active-site residue. Intrachain disulfides connect Cys-51-Cys-110, Cys-65-Cys-121, Cys-83-Cys-136, and Cys-90-Cys-98. Residues 66–70 (KRVNT), Lys-91, and Arg-111 contribute to the substrate site. His-145 acts as the Proton donor in catalysis.

Belongs to the pancreatic ribonuclease family. In terms of assembly, monomer.

The protein resides in the secreted. The catalysed reaction is an [RNA] containing cytidine + H2O = an [RNA]-3'-cytidine-3'-phosphate + a 5'-hydroxy-ribonucleotide-3'-[RNA].. The enzyme catalyses an [RNA] containing uridine + H2O = an [RNA]-3'-uridine-3'-phosphate + a 5'-hydroxy-ribonucleotide-3'-[RNA].. Its function is as follows. Endonuclease that catalyzes the cleavage of RNA on the 3' side of pyrimidine nucleotides. Acts on single-stranded and double-stranded RNA. In Rattus exulans (Polynesian rat), this protein is Ribonuclease pancreatic delta-type.